A 546-amino-acid chain; its full sequence is Major facilitator superfamily transporter MPN_077 (546 aa).

The next 12 membrane-spanning stretches (helical) occupy residues W2–I22, W62–F82, V88–L108, A179–A199, F220–G240, V248–F268, L305–F325, P344–F364, F377–G397, V401–L421, I442–T462, and I485–L505.

The protein belongs to the major facilitator superfamily.

It is found in the cell membrane. In Mycoplasma pneumoniae (strain ATCC 29342 / M129 / Subtype 1) (Mycoplasmoides pneumoniae), this protein is Major facilitator superfamily transporter MPN_077.